The sequence spans 146 residues: Large ribosomal subunit protein bL9 (146 aa).

Belongs to the bacterial ribosomal protein bL9 family.

Its function is as follows. Binds to the 23S rRNA. The polypeptide is Large ribosomal subunit protein bL9 (Symbiobacterium thermophilum (strain DSM 24528 / JCM 14929 / IAM 14863 / T)).